The chain runs to 140 residues: ATP synthase epsilon chain (140 aa).

It belongs to the ATPase epsilon chain family. F-type ATPases have 2 components, CF(1) - the catalytic core - and CF(0) - the membrane proton channel. CF(1) has five subunits: alpha(3), beta(3), gamma(1), delta(1), epsilon(1). CF(0) has three main subunits: a, b and c.

Its subcellular location is the cell inner membrane. Produces ATP from ADP in the presence of a proton gradient across the membrane. The polypeptide is ATP synthase epsilon chain (Vibrio parahaemolyticus serotype O3:K6 (strain RIMD 2210633)).